We begin with the raw amino-acid sequence, 238 residues long: Zinc-finger homeodomain protein 11 (238 aa).

A ZF-HD dimerization-type; degenerate zinc finger spans residues 12–59 (YRECMRNHAAKLGTYANDGCCEYTPDDGHPAGLLCAACGCHRNFHRKD). A DNA-binding region (homeobox) is located at residues 119-188 (RRRTRTKFTE…NHKAGGGGGG (70 aa)). Over residues 183–200 (GGGGGGGGSGGPGAGGGA) the composition is skewed to gly residues. The interval 183–238 (GGGGGGGGSGGPGAGGGAQTSSSTTRGGGDVGVGLSPAMGGDGEDDEEVRGSEMCM) is disordered.

As to quaternary structure, homo- and heterodimer with other ZFHD proteins.

The protein localises to the nucleus. Putative transcription factor. The sequence is that of Zinc-finger homeodomain protein 11 (ZHD11) from Oryza sativa subsp. indica (Rice).